Here is a 357-residue protein sequence, read N- to C-terminus: O-methyltransferase 9 (357 aa).

The S-adenosyl-L-methionine site is built by glycine 200, aspartate 224, asparagine 249, phenylalanine 250, and lysine 263. Residue histidine 267 is the Proton acceptor of the active site.

This sequence belongs to the class I-like SAM-binding methyltransferase superfamily. Cation-independent O-methyltransferase family. COMT subfamily.

It catalyses the reaction (3,5-dichloro-2,4,6-trihydroxyphenyl)hexan-1-one + S-adenosyl-L-methionine = 1-(3,5-dichloro-2,6-dihydroxy-4-methoxyphenyl)hexan-1-one + S-adenosyl-L-homocysteine + H(+). The protein is O-methyltransferase 9 (omt9) of Dictyostelium discoideum (Social amoeba).